We begin with the raw amino-acid sequence, 523 residues long: Peptidyl-prolyl cis-trans isomerase 4 (523 aa).

Residues 38–111 (KRLPINHCSL…GKFRCPVTFR (74 aa)) form the U-box domain. The PPIase cyclophilin-type domain maps to 278–433 (KNAFVRLVTN…VSVVIMRAEV (156 aa)).

Belongs to the cyclophilin-type PPIase family. PPIL2 subfamily. Interacts with mep-1. As to expression, exclusively in the larval body wall striated muscle cells.

It is found in the nucleus. The enzyme catalyses [protein]-peptidylproline (omega=180) = [protein]-peptidylproline (omega=0). It carries out the reaction S-ubiquitinyl-[E2 ubiquitin-conjugating enzyme]-L-cysteine + [acceptor protein]-L-lysine = [E2 ubiquitin-conjugating enzyme]-L-cysteine + N(6)-ubiquitinyl-[acceptor protein]-L-lysine.. Its pathway is protein modification; protein ubiquitination. In terms of biological role, may catalyze the cis-trans isomerization of proline imidic peptide bonds in oligopeptides thereby assisting the folding of proteins. May also function as a chaperone, playing a role in intracellular transport of proteins. May also have a protein ubiquitin ligase activity acting as an E3 ubiquitin protein ligase or as a ubiquitin-ubiquitin ligase promoting elongation of ubiquitin chains on proteins. Influences the hermaphrodite switch from spermatogenesis to oogenesis. Required for body wall muscle cell development. The protein is Peptidyl-prolyl cis-trans isomerase 4 (cyn-4) of Caenorhabditis elegans.